Consider the following 182-residue polypeptide: Mid1-interacting protein 1 (182 aa).

The residue at position 1 (Met-1) is an N-acetylmethionine. Residues 55–75 (VGGSGGCLEERTTPAPSPGSA) form a disordered region. Residues Ser-71, Ser-74, and Ser-78 each carry the phosphoserine modification.

Belongs to the SPOT14 family. As to quaternary structure, homodimer in the absence of THRSP. Heterodimer with THRSP. The homodimer interacts with ACACA and ACACB. Promotes polymerization of Acetyl-CoA carboxylase to form complexes that contain MID1IP1 and ACACA and/or ACACB. Interaction with THRSP interferes with ACACA binding. In terms of tissue distribution, during embryonic development, expressed mainly in the neuroepithelial midline, urogenital apparatus and digits. Detected in adult white fat, liver, heart, brain and kidney. Expressed at very low levels in lactating mammary gland.

Its subcellular location is the nucleus. It localises to the cytoplasm. The protein localises to the cytoskeleton. Functionally, plays a role in the regulation of lipogenesis in liver. Up-regulates ACACA enzyme activity. Required for efficient lipid biosynthesis, including triacylglycerol, diacylglycerol and phospholipid. Involved in stabilization of microtubules. The polypeptide is Mid1-interacting protein 1 (Mid1ip1) (Mus musculus (Mouse)).